The sequence spans 180 residues: MSNEIVAKRYAVALFQIAKEKHVLEMFEEELGLVQSVFMKNEELHSFLTKPNISKEQKKMFLSNVFSSVSESILNTLYILVDNKRIEILPAIANEYVTLANEERNVADATVYSTRLLSEEEKLNIAEAFAKRTGKDAIRVKNIVDEDLLGGIKVRIGNRIYDGSLQGKLARIQRELMKNR.

Belongs to the ATPase delta chain family. F-type ATPases have 2 components, F(1) - the catalytic core - and F(0) - the membrane proton channel. F(1) has five subunits: alpha(3), beta(3), gamma(1), delta(1), epsilon(1). F(0) has three main subunits: a(1), b(2) and c(10-14). The alpha and beta chains form an alternating ring which encloses part of the gamma chain. F(1) is attached to F(0) by a central stalk formed by the gamma and epsilon chains, while a peripheral stalk is formed by the delta and b chains.

It is found in the cell membrane. In terms of biological role, f(1)F(0) ATP synthase produces ATP from ADP in the presence of a proton or sodium gradient. F-type ATPases consist of two structural domains, F(1) containing the extramembraneous catalytic core and F(0) containing the membrane proton channel, linked together by a central stalk and a peripheral stalk. During catalysis, ATP synthesis in the catalytic domain of F(1) is coupled via a rotary mechanism of the central stalk subunits to proton translocation. This protein is part of the stalk that links CF(0) to CF(1). It either transmits conformational changes from CF(0) to CF(1) or is implicated in proton conduction. This chain is ATP synthase subunit delta, found in Bacillus cytotoxicus (strain DSM 22905 / CIP 110041 / 391-98 / NVH 391-98).